Here is a 422-residue protein sequence, read N- to C-terminus: Protein phosphatase methylesterase 1 (422 aa).

A disordered region spans residues 1 to 27 (MSDMFRKSVLNKLPHLPPTRAPWADES). Catalysis depends on residues serine 207, aspartate 234, and histidine 371.

The protein belongs to the AB hydrolase superfamily.

The enzyme catalyses [phosphatase 2A protein]-C-terminal L-leucine methyl ester + H2O = [phosphatase 2A protein]-C-terminal L-leucine + methanol + H(+). Functionally, demethylates proteins that have been reversibly carboxymethylated. Demethylates the phosphatase PP2A catalytic subunit. The sequence is that of Protein phosphatase methylesterase 1 (PPE1) from Cryptococcus neoformans var. neoformans serotype D (strain JEC21 / ATCC MYA-565) (Filobasidiella neoformans).